A 147-amino-acid chain; its full sequence is 3-dehydroquinate dehydratase (147 aa).

The Proton acceptor role is filled by tyrosine 23. Residues asparagine 74, histidine 80, and aspartate 87 each contribute to the substrate site. The active-site Proton donor is histidine 100. Substrate-binding positions include 101-102 (LS) and arginine 111.

It belongs to the type-II 3-dehydroquinase family. Homododecamer.

The enzyme catalyses 3-dehydroquinate = 3-dehydroshikimate + H2O. It participates in metabolic intermediate biosynthesis; chorismate biosynthesis; chorismate from D-erythrose 4-phosphate and phosphoenolpyruvate: step 3/7. Functionally, catalyzes a trans-dehydration via an enolate intermediate. This Clostridium botulinum (strain Okra / Type B1) protein is 3-dehydroquinate dehydratase.